The following is a 117-amino-acid chain: Large ribosomal subunit protein bL19 (117 aa).

The protein belongs to the bacterial ribosomal protein bL19 family.

Functionally, this protein is located at the 30S-50S ribosomal subunit interface and may play a role in the structure and function of the aminoacyl-tRNA binding site. The protein is Large ribosomal subunit protein bL19 of Alkaliphilus metalliredigens (strain QYMF).